The chain runs to 342 residues: Probable dual-specificity RNA methyltransferase RlmN (342 aa).

The active-site Proton acceptor is glutamate 91. The 231-residue stretch at 97–327 (YKHGNSICVS…TTIRREMGAD (231 aa)) folds into the Radical SAM core domain. Cysteine 104 and cysteine 332 are disulfide-bonded. 3 residues coordinate [4Fe-4S] cluster: cysteine 111, cysteine 115, and cysteine 118. Residues 158-159 (GE), serine 190, 213-215 (SLH), and asparagine 289 contribute to the S-adenosyl-L-methionine site. The active-site S-methylcysteine intermediate is cysteine 332.

The protein belongs to the radical SAM superfamily. RlmN family. [4Fe-4S] cluster is required as a cofactor.

It is found in the cytoplasm. The enzyme catalyses adenosine(2503) in 23S rRNA + 2 reduced [2Fe-2S]-[ferredoxin] + 2 S-adenosyl-L-methionine = 2-methyladenosine(2503) in 23S rRNA + 5'-deoxyadenosine + L-methionine + 2 oxidized [2Fe-2S]-[ferredoxin] + S-adenosyl-L-homocysteine. The catalysed reaction is adenosine(37) in tRNA + 2 reduced [2Fe-2S]-[ferredoxin] + 2 S-adenosyl-L-methionine = 2-methyladenosine(37) in tRNA + 5'-deoxyadenosine + L-methionine + 2 oxidized [2Fe-2S]-[ferredoxin] + S-adenosyl-L-homocysteine. Functionally, specifically methylates position 2 of adenine 2503 in 23S rRNA and position 2 of adenine 37 in tRNAs. The polypeptide is Probable dual-specificity RNA methyltransferase RlmN (Clostridium botulinum (strain Langeland / NCTC 10281 / Type F)).